The primary structure comprises 406 residues: Argininosuccinate synthase (406 aa).

ATP contacts are provided by residues 13 to 21 and Ala40; that span reads AYSGGLDTS. Positions 91 and 96 each coordinate L-citrulline. Residue Gly121 participates in ATP binding. Residues Thr123, Asn127, and Asp128 each coordinate L-aspartate. Residue Asn127 participates in L-citrulline binding. Residues Arg131, Ser182, Ser191, Glu267, and Tyr279 each coordinate L-citrulline.

This sequence belongs to the argininosuccinate synthase family. Type 1 subfamily. Homotetramer.

It is found in the cytoplasm. The enzyme catalyses L-citrulline + L-aspartate + ATP = 2-(N(omega)-L-arginino)succinate + AMP + diphosphate + H(+). It functions in the pathway amino-acid biosynthesis; L-arginine biosynthesis; L-arginine from L-ornithine and carbamoyl phosphate: step 2/3. The chain is Argininosuccinate synthase from Brucella suis biovar 1 (strain 1330).